Here is a 553-residue protein sequence, read N- to C-terminus: Putative transport protein YidE (553 aa).

Transmembrane regions (helical) follow at residues I4–V24, G28–S48, F65–S85, L95–F115, and M158–L178. RCK C-terminal domains are found at residues Q191 to Q276 and D279 to N361. The next 6 helical transmembrane spans lie at M371 to V391, G393 to L413, I439 to V459, L464 to L484, Y493 to A513, and L533 to G553.

This sequence belongs to the AAE transporter (TC 2.A.81) family. YidE subfamily.

Its subcellular location is the cell membrane. The protein is Putative transport protein YidE of Shigella boydii serotype 18 (strain CDC 3083-94 / BS512).